A 445-amino-acid chain; its full sequence is NAD-specific glutamate dehydrogenase (445 aa).

Lys124 is a catalytic residue.

Belongs to the Glu/Leu/Phe/Val dehydrogenases family. In terms of assembly, homohexamer.

It localises to the cell surface. It carries out the reaction L-glutamate + NAD(+) + H2O = 2-oxoglutarate + NH4(+) + NADH + H(+). Its function is as follows. Probably involved in degradation rather than biosynthesis of glutamate. This chain is NAD-specific glutamate dehydrogenase (gdh), found in Porphyromonas gingivalis (strain ATCC 33277 / DSM 20709 / CIP 103683 / JCM 12257 / NCTC 11834 / 2561).